We begin with the raw amino-acid sequence, 459 residues long: NADH-ubiquinone oxidoreductase chain 4 (459 aa).

13 consecutive transmembrane segments (helical) span residues 22 to 42 (MIWINTTTHSLIISIIPLLFF), 60 to 80 (PLTTPLLMLTTWLLPLTIMAS), 94 to 112 (LYLSMLISLQISLIMTFTA), 113 to 133 (TELIMFYIFFEATLIPTLVII), 145 to 165 (AGTYFLFYTLVGSLPLLIALI), 196 to 216 (WLAYTMAFMVKMPLYGLHLWL), 224 to 244 (PIAGSMMLAAVLLKLGGYGMM), 257 to 277 (MAYPFLALSLWGMIMTSSISL), 284 to 303 (SLIAYSSISHMALVVAAILI), 308 to 330 (SFTGAVVLMIAHGLTSSLLFCLA), 351 to 371 (LLPLMALWWLLASLANLALPP), 391 to 411 (TTLLLTGSNMLITALYSLYMF), and 435 to 455 (ILMFMHLSPILLLSLNPDIIT).

The protein belongs to the complex I subunit 4 family. In terms of assembly, core subunit of respiratory chain NADH dehydrogenase (Complex I) which is composed of 45 different subunits.

The protein localises to the mitochondrion inner membrane. The enzyme catalyses a ubiquinone + NADH + 5 H(+)(in) = a ubiquinol + NAD(+) + 4 H(+)(out). In terms of biological role, core subunit of the mitochondrial membrane respiratory chain NADH dehydrogenase (Complex I) which catalyzes electron transfer from NADH through the respiratory chain, using ubiquinone as an electron acceptor. Essential for the catalytic activity and assembly of complex I. This is NADH-ubiquinone oxidoreductase chain 4 (MT-ND4) from Gorilla gorilla gorilla (Western lowland gorilla).